The sequence spans 238 residues: SPEG neighbor protein (238 aa).

The IQ domain maps to 29–55 (QSAAIRIQASYRGHRSRKELREKGPPR). 2 consecutive Ig-like domains span residues 54-143 (PRVL…ARIL) and 147-236 (PTKI…ARVD).

The polypeptide is SPEG neighbor protein (Homo sapiens (Human)).